A 208-amino-acid polypeptide reads, in one-letter code: NAD(P)H-hydrate epimerase (208 aa).

A YjeF N-terminal domain is found at 10–208; that stretch reads IRDAERQTLA…TLGVIMTPAN (199 aa). 54 to 58 is a binding site for (6S)-NADPHX; that stretch reads NNGGD. K(+)-binding residues include Asn-55 and Asp-117. (6S)-NADPHX-binding positions include 121–127 and Asp-150; that span reads GIGLNRP. Ser-153 is a K(+) binding site.

The protein belongs to the NnrE/AIBP family. It depends on K(+) as a cofactor.

It catalyses the reaction (6R)-NADHX = (6S)-NADHX. The catalysed reaction is (6R)-NADPHX = (6S)-NADPHX. Its function is as follows. Catalyzes the epimerization of the S- and R-forms of NAD(P)HX, a damaged form of NAD(P)H that is a result of enzymatic or heat-dependent hydration. This is a prerequisite for the S-specific NAD(P)H-hydrate dehydratase to allow the repair of both epimers of NAD(P)HX. This chain is NAD(P)H-hydrate epimerase, found in Achromobacter xylosoxidans (strain A8).